The primary structure comprises 213 residues: Pyridoxine/pyridoxamine 5'-phosphate oxidase (213 aa).

FMN is bound by residues 60-65 (RMVLMK), 75-76 (YS), K82, and Q104. K65 contributes to the substrate binding site. Substrate contacts are provided by Y122 and R126. FMN-binding positions include 139-140 (QS) and W184. 190–192 (RLH) lines the substrate pocket. FMN is bound at residue R194.

Belongs to the pyridoxamine 5'-phosphate oxidase family. In terms of assembly, homodimer. Requires FMN as cofactor.

It carries out the reaction pyridoxamine 5'-phosphate + O2 + H2O = pyridoxal 5'-phosphate + H2O2 + NH4(+). The catalysed reaction is pyridoxine 5'-phosphate + O2 = pyridoxal 5'-phosphate + H2O2. Its pathway is cofactor metabolism; pyridoxal 5'-phosphate salvage; pyridoxal 5'-phosphate from pyridoxamine 5'-phosphate: step 1/1. The protein operates within cofactor metabolism; pyridoxal 5'-phosphate salvage; pyridoxal 5'-phosphate from pyridoxine 5'-phosphate: step 1/1. Functionally, catalyzes the oxidation of either pyridoxine 5'-phosphate (PNP) or pyridoxamine 5'-phosphate (PMP) into pyridoxal 5'-phosphate (PLP). This Bradyrhizobium diazoefficiens (strain JCM 10833 / BCRC 13528 / IAM 13628 / NBRC 14792 / USDA 110) protein is Pyridoxine/pyridoxamine 5'-phosphate oxidase.